The sequence spans 77 residues: Large ribosomal subunit protein bL28 (77 aa).

The protein belongs to the bacterial ribosomal protein bL28 family.

This is Large ribosomal subunit protein bL28 from Ralstonia pickettii (strain 12J).